Reading from the N-terminus, the 652-residue chain is MADAAQNQMVEIDPDFEPLSRPRSCTWPLPRPEFPNPAAADSNTSSPAPSVKQEPSSTADFINNLSLLEENEDYPDQKPLMLCSEFQCQENCIHQQQIPSQQQQVPVLSSPVAAAAAAAAAAQRKSSSSRRNAWGNMSYADLITKAIESSPEKRLTLSQIYDWMVKSVPYFKDKGDSNSSAGWKNSIRHNLSLHSRFIRVQNEGTGKSSWWMLNPEGGKSGKSPRRRAASMDNNSKFAKSRGRAAKKKLALQGGPEGGADSPGSQYGKWPGSPNSHSNDDFEAWTAFRPRTSSNASTLSGRLSPFIDDELGDSDVHMVYPGPGSGTKMTSTLPSLSEMAGSLGHSGSENVMENLLDNLNLLSPKNPSTGGPGSGSNQSSPSSLMQASPGYSPYSSPGLSAVSQQTQQDFRKCLYGQAGMGSMSPMPMQPLPESKPSFGPGGGTMGQFNCTAGLLKELLTSDGEPGDLMPSVDTVVSQSAGGSGCMLPPYSSGRNELMGGGPTHSHTLSHPHNMHGQAPPTSVALNGRSLHPLTAIGHSSVGGRLGSGKSPMQMQYGGSGHLGGGLPPYCSMSSNGYGRGPGMMAHQQLQHLEKLPSDLDGMPIERFECDVESILHDTLMDGESLDFNFDPMNSQQGFVPHSVKTTTHSWVSG.

Disordered regions lie at residues 1–57, 208–277, and 359–406; these read MADA…EPSS, SSWW…NSHS, and NLLS…QQTQ. Residues 41 to 57 show a composition bias toward polar residues; sequence DSNTSSPAPSVKQEPSS. Positions 134 to 228 form a DNA-binding region, fork-head; the sequence is WGNMSYADLI…KSGKSPRRRA (95 aa). Positions 238 to 249 are enriched in basic residues; that stretch reads AKSRGRAAKKKL. Over residues 362-397 the composition is skewed to low complexity; the sequence is SPKNPSTGGPGSGSNQSSPSSLMQASPGYSPYSSPG.

It is found in the cytoplasm. It localises to the nucleus. In terms of biological role, transcription factor that regulates metabolic homeostasis in response to oxidative stress. Binds to the consensus sequence 5'-TT[G/A]TTTTG-3' and the related Daf-16 family binding element (DBE) with consensus sequence 5'-TT[G/A]TTTAC-3'. Main regulator of redox balance and osteoblast numbers and controls bone mass. Orchestrates the endocrine function of the skeleton in regulating glucose metabolism. May be involved in regulating cellular homeostasis in the eye. May act as a positive regulator of apoptosis in cardiac smooth muscle cells as a result of its transcriptional activation of pro-apoptotic genes. The protein is Forkhead box protein O1-A (foxo1a) of Danio rerio (Zebrafish).